Consider the following 551-residue polypeptide: Tetrachloroethene reductive dehalogenase (551 aa).

Positions 1 to 39 form a signal peptide, tat-type signal; the sequence is MGEINRRNFLKASMLGAAAAAVASASVVKGVVSPLVADA. The 4Fe-4S ferredoxin-type 1 domain maps to 411–440; the sequence is PRKFGVREFCRLCKKCADACPAQAISHEKD. Cysteine 420, cysteine 423, cysteine 426, cysteine 430, cysteine 467, cysteine 478, cysteine 481, and cysteine 485 together coordinate [4Fe-4S] cluster. One can recognise a 4Fe-4S ferredoxin-type 2 domain in the interval 478–496; that stretch reads CSNCVAVCSWNKVETWNHD.

It belongs to the PceA family. The cofactor is [4Fe-4S] cluster. Corrinoid serves as cofactor. Predicted to be exported by the Tat system. The position of the signal peptide cleavage has been experimentally proven.

It localises to the cell membrane. It catalyses the reaction trichloroethene + chloride + A + H(+) = tetrachloroethene + AH2. It carries out the reaction trichloroethene + AH2 = (Z)-1,2-dichloroethene + chloride + A + H(+). Catalyzes the reductive dechlorination of tetrachloroethene (PCE) to trichloroethene (TCE) and of trichloroethene to cis-1,2-dichloroethene (DCE). Reduced methyl viologen can act as the artificial electron donor. The protein is Tetrachloroethene reductive dehalogenase of Desulfitobacterium hafniense (Desulfitobacterium frappieri).